The sequence spans 356 residues: Photosystem II protein D1 (356 aa).

Helical transmembrane passes span 29–46 (YVGW…TATT), 118–133 (HFLI…QWEL), and 142–156 (WICV…AATA). Histidine 118 is a chlorophyll a binding site. Tyrosine 126 is a binding site for pheophytin a. Residues aspartate 170 and glutamate 189 each contribute to the [CaMn4O5] cluster site. The helical transmembrane segment at 197 to 218 (FHMLGVAGVFGGSLFSAMHGSL) threads the bilayer. Histidine 198 lines the chlorophyll a pocket. A quinone contacts are provided by residues histidine 215 and 264–265 (SF). Histidine 215 provides a ligand contact to Fe cation. A Fe cation-binding site is contributed by histidine 272. The chain crosses the membrane as a helical span at residues 274–288 (FLGAWPVIGIWFTAM). Histidine 332, glutamate 333, aspartate 342, and alanine 344 together coordinate [CaMn4O5] cluster. Residues 345-356 (SAEPVSAPVING) constitute a propeptide that is removed on maturation.

The protein belongs to the reaction center PufL/M/PsbA/D family. In terms of assembly, PSII is composed of 1 copy each of membrane proteins PsbA, PsbB, PsbC, PsbD, PsbE, PsbF, PsbH, PsbI, PsbJ, PsbK, PsbL, PsbM, PsbT, PsbX, PsbY, PsbZ, Psb30/Ycf12, peripheral proteins PsbO, CyanoQ (PsbQ), PsbU, PsbV and a large number of cofactors. It forms dimeric complexes. The D1/D2 heterodimer binds P680, chlorophylls that are the primary electron donor of PSII, and subsequent electron acceptors. It shares a non-heme iron and each subunit binds pheophytin, quinone, additional chlorophylls, carotenoids and lipids. D1 provides most of the ligands for the Mn4-Ca-O5 cluster of the oxygen-evolving complex (OEC). There is also a Cl(-1) ion associated with D1 and D2, which is required for oxygen evolution. The PSII complex binds additional chlorophylls, carotenoids and specific lipids. is required as a cofactor. Post-translationally, tyr-161 forms a radical intermediate that is referred to as redox-active TyrZ, YZ or Y-Z. In terms of processing, C-terminally processed by CtpA; processing is essential to allow assembly of the oxygen-evolving complex and thus photosynthetic growth.

The protein resides in the cellular thylakoid membrane. It catalyses the reaction 2 a plastoquinone + 4 hnu + 2 H2O = 2 a plastoquinol + O2. Functionally, photosystem II (PSII) is a light-driven water:plastoquinone oxidoreductase that uses light energy to abstract electrons from H(2)O, generating O(2) and a proton gradient subsequently used for ATP formation. It consists of a core antenna complex that captures photons, and an electron transfer chain that converts photonic excitation into a charge separation. The D1/D2 (PsbA/PsbD) reaction center heterodimer binds P680, the primary electron donor of PSII as well as several subsequent electron acceptors. The sequence is that of Photosystem II protein D1 from Crocosphaera subtropica (strain ATCC 51142 / BH68) (Cyanothece sp. (strain ATCC 51142)).